A 398-amino-acid polypeptide reads, in one-letter code: Putative isocitrate lyase subunit B (398 aa).

It belongs to the isocitrate lyase/PEP mutase superfamily. Isocitrate lyase family. Mg(2+) serves as cofactor.

It carries out the reaction D-threo-isocitrate = glyoxylate + succinate. Together with AceAa, they could catalyze the formation of succinate and glyoxylate from isocitrate. The polypeptide is Putative isocitrate lyase subunit B (aceAb) (Mycobacterium tuberculosis (strain ATCC 25618 / H37Rv)).